Here is a 337-residue protein sequence, read N- to C-terminus: Lipoyl synthase (337 aa).

[4Fe-4S] cluster contacts are provided by Cys-81, Cys-86, Cys-92, Cys-107, Cys-111, Cys-114, and Ser-323. The Radical SAM core domain occupies 93-312 (FSHGTATFMI…EEYGNALGFS (220 aa)).

This sequence belongs to the radical SAM superfamily. Lipoyl synthase family. Requires [4Fe-4S] cluster as cofactor.

The protein resides in the cytoplasm. It catalyses the reaction [[Fe-S] cluster scaffold protein carrying a second [4Fe-4S](2+) cluster] + N(6)-octanoyl-L-lysyl-[protein] + 2 oxidized [2Fe-2S]-[ferredoxin] + 2 S-adenosyl-L-methionine + 4 H(+) = [[Fe-S] cluster scaffold protein] + N(6)-[(R)-dihydrolipoyl]-L-lysyl-[protein] + 4 Fe(3+) + 2 hydrogen sulfide + 2 5'-deoxyadenosine + 2 L-methionine + 2 reduced [2Fe-2S]-[ferredoxin]. It functions in the pathway protein modification; protein lipoylation via endogenous pathway; protein N(6)-(lipoyl)lysine from octanoyl-[acyl-carrier-protein]: step 2/2. Functionally, catalyzes the radical-mediated insertion of two sulfur atoms into the C-6 and C-8 positions of the octanoyl moiety bound to the lipoyl domains of lipoate-dependent enzymes, thereby converting the octanoylated domains into lipoylated derivatives. This Xanthomonas campestris pv. campestris (strain 8004) protein is Lipoyl synthase.